A 378-amino-acid polypeptide reads, in one-letter code: Spermidine/putrescine import ATP-binding protein PotA (378 aa).

The region spanning 18-248 (VQLAGIRKCF…PKNLFVAGFI (231 aa)) is the ABC transporter domain. 50–57 (GPSGCGKT) contacts ATP.

This sequence belongs to the ABC transporter superfamily. Spermidine/putrescine importer (TC 3.A.1.11.1) family. The complex is composed of two ATP-binding proteins (PotA), two transmembrane proteins (PotB and PotC) and a solute-binding protein (PotD).

It localises to the cell inner membrane. It catalyses the reaction ATP + H2O + polyamine-[polyamine-binding protein]Side 1 = ADP + phosphate + polyamineSide 2 + [polyamine-binding protein]Side 1.. Functionally, part of the ABC transporter complex PotABCD involved in spermidine/putrescine import. Responsible for energy coupling to the transport system. This Shigella boydii serotype 4 (strain Sb227) protein is Spermidine/putrescine import ATP-binding protein PotA.